Consider the following 1104-residue polypeptide: Carbamoyl phosphate synthase large chain (1104 aa).

The segment at 1 to 403 (MPRRQDIQKI…SFQKALRSLE (403 aa)) is carboxyphosphate synthetic domain. Positions 129, 170, 176, 177, 209, 211, 216, 242, 243, 244, 286, and 300 each coordinate ATP. One can recognise an ATP-grasp 1 domain in the interval 133 to 329 (NEAMDKIGVK…IAKMAAKLAV (197 aa)). 3 residues coordinate Mg(2+): Q286, E300, and N302. Mn(2+) contacts are provided by Q286, E300, and N302. An oligomerization domain region spans residues 404-552 (TGRAGWGCDK…YSTYEEETEV (149 aa)). The carbamoyl phosphate synthetic domain stretch occupies residues 553-966 (IPASKPKVMI…AFAKAELGAG (414 aa)). The ATP-grasp 2 domain maps to 703–900 (EKILQKLNIS…LAKLASLIMS (198 aa)). 10 residues coordinate ATP: R739, K778, L780, E785, G811, I812, H813, S814, Q854, and E871. Mg(2+) contacts are provided by Q854, E871, and N873. Positions 854, 871, and 873 each coordinate Mn(2+). Positions 967–1104 (ERLPLTGTVF…KTIQEYCPNF (138 aa)) constitute an MGS-like domain. The interval 967-1104 (ERLPLTGTVF…KTIQEYCPNF (138 aa)) is allosteric domain.

This sequence belongs to the CarB family. In terms of assembly, composed of two chains; the small (or glutamine) chain promotes the hydrolysis of glutamine to ammonia, which is used by the large (or ammonia) chain to synthesize carbamoyl phosphate. Tetramer of heterodimers (alpha,beta)4. Mg(2+) serves as cofactor. Mn(2+) is required as a cofactor.

It catalyses the reaction hydrogencarbonate + L-glutamine + 2 ATP + H2O = carbamoyl phosphate + L-glutamate + 2 ADP + phosphate + 2 H(+). The catalysed reaction is hydrogencarbonate + NH4(+) + 2 ATP = carbamoyl phosphate + 2 ADP + phosphate + 2 H(+). Its pathway is amino-acid biosynthesis; L-arginine biosynthesis; carbamoyl phosphate from bicarbonate: step 1/1. The protein operates within pyrimidine metabolism; UMP biosynthesis via de novo pathway; (S)-dihydroorotate from bicarbonate: step 1/3. In terms of biological role, large subunit of the glutamine-dependent carbamoyl phosphate synthetase (CPSase). CPSase catalyzes the formation of carbamoyl phosphate from the ammonia moiety of glutamine, carbonate, and phosphate donated by ATP, constituting the first step of 2 biosynthetic pathways, one leading to arginine and/or urea and the other to pyrimidine nucleotides. The large subunit (synthetase) binds the substrates ammonia (free or transferred from glutamine from the small subunit), hydrogencarbonate and ATP and carries out an ATP-coupled ligase reaction, activating hydrogencarbonate by forming carboxy phosphate which reacts with ammonia to form carbamoyl phosphate. This is Carbamoyl phosphate synthase large chain from Nostoc sp. (strain PCC 7120 / SAG 25.82 / UTEX 2576).